A 220-amino-acid polypeptide reads, in one-letter code: Ribonuclease HII (220 aa).

The RNase H type-2 domain occupies 32 to 220; the sequence is KHIVGIDEAG…FAPIKGRYSV (189 aa). Residues aspartate 38, glutamate 39, and aspartate 130 each coordinate a divalent metal cation.

Belongs to the RNase HII family. The cofactor is Mn(2+). Mg(2+) is required as a cofactor.

The protein resides in the cytoplasm. It catalyses the reaction Endonucleolytic cleavage to 5'-phosphomonoester.. Endonuclease that specifically degrades the RNA of RNA-DNA hybrids. The protein is Ribonuclease HII of Brucella anthropi (strain ATCC 49188 / DSM 6882 / CCUG 24695 / JCM 21032 / LMG 3331 / NBRC 15819 / NCTC 12168 / Alc 37) (Ochrobactrum anthropi).